Consider the following 88-residue polypeptide: UPF0250 protein Shal_3239 (88 aa).

The protein belongs to the UPF0250 family.

This Shewanella halifaxensis (strain HAW-EB4) protein is UPF0250 protein Shal_3239.